The primary structure comprises 527 residues: F-box-like/WD repeat-containing protein TBL1X (527 aa).

N-acetylserine is present on Ser2. The LisH domain occupies 4 to 36 (TSDEVNFLVYRYLQESGFSHSAFTFGIESHISQ). The F-box-like domain maps to 41-86 (GTLVPPAALISILQKGLQYVEAEISINEDGTVFDGRPIESLSLIDA). An N6-acetyllysine modification is found at Lys102. Positions 127–164 (TTPAAAAQQNPPKNGEATVNGEENGAHAINNHSKPMEI) are disordered. 8 WD repeats span residues 180–219 (GHESEVFICAWNPVSDLLASGSGDSTARIWNLNENSNGGS), 236–275 (PSNKDVTSLDWNSDGTLLATGSYDGFARIWTEDGNLASTL), 277–316 (QHKGPIFALKWNKKGNYILSAGVDKTTIIWDAHTGEAKQQ), 319–359 (FHSA…KTFQ), 360–399 (GHTNEVNAIKWDPSGMLLASCSDDMTLKIWSMKQDACVHD), 402–450 (AHSK…CIHT), 453–492 (KHQEPVYSVAFSPDGKYLASGSFDKCVHIWNTQSGSLVHS), and 494–526 (RGTGGIFEVCWNARGDKVGASASDGSVCVLDLR). Residue Lys290 forms a Glycyl lysine isopeptide (Lys-Gly) (interchain with G-Cter in SUMO2) linkage.

The protein belongs to the WD repeat EBI family. As to quaternary structure, homotetramer; dimer of dimers. Component of the N-Cor repressor complex, at least composed of NCOR1, NCOR2, HDAC3, TBL1X, TBL1R, CORO2A and GPS2. Component of a E3 ubiquitin ligase complex containing UBE2D1, SIAH1, CACYBP/SIP, SKP1, APC and TBL1X. Interacts with GPS2 (when sumoylated); leading to protect GPS2 against degradation by the proteasome. Probably part of other corepressor complexes, that do not contain NCOR1 and NCOR2. Interacts with histones H2B, H3a and H4. Interacts with MECP2; recruits TBL1X to the heterochromatin foci. Interacts with USP44. Expressed in the cochlea.

It is found in the nucleus. Functionally, F-box-like protein involved in the recruitment of the ubiquitin/19S proteasome complex to nuclear receptor-regulated transcription units. Plays an essential role in transcription activation mediated by nuclear receptors. Probably acts as integral component of corepressor complexes that mediates the recruitment of the 19S proteasome complex, leading to the subsequent proteasomal degradation of transcription repressor complexes, thereby allowing cofactor exchange. The sequence is that of F-box-like/WD repeat-containing protein TBL1X (Tbl1x) from Mus musculus (Mouse).